An 88-amino-acid chain; its full sequence is Synaptonemal complex central element protein 3 (88 aa).

The stretch at E7–K75 forms a coiled coil.

As to quaternary structure, homodimer. Can form higher-order homooligomers. Interacts with SYCP1 (via tetrameric core); the interaction remodels SYCP1 homotetramers to 2:1 heterotrimers with SYCE3. SYCP1/SYCE3 heterotrimers form lattice assemblies as part of the mature synaptonemal complex via both lateral and head-to-head interactions. Interacts with the SYCE1-SIX6OS1 complex; the interaction recruits the SYCE1-SIX6OS1 complex to the central element of the synaptonemal complex. Interacts with the SYCE2-TEX12 complex; the interaction promotes fibrous assembly of SYCE2-TEX12 as part of the synaptonemal complex central element. Interacts with SYCE1. Interacts with SYCE2. Interacts with proteasome subunit PSMA8; to participate in meiosis progression during spermatogenesis. Interacts with SPO16.

The protein localises to the nucleus. The protein resides in the chromosome. In terms of biological role, major component of the transverse central element of synaptonemal complexes (SCS), formed between homologous chromosomes during meiotic prophase. Required for the assembly of the central element of the synaptonemal complex during meiosis, via remodeling of SYCP1 lattice structures and promoting recruitment of SYCE2-TEX12 and SYCE1-SIX60S1 complexes. Required for chromosome loading of the central element-specific SCS proteins, and for initiating synapsis between homologous chromosomes. Chromosome loading appears to require SYCP1. Required for fertility and normal testis development. In Homo sapiens (Human), this protein is Synaptonemal complex central element protein 3.